The chain runs to 181 residues: ADP-ribosylation factor 1 (181 aa).

Glycine 2 carries the N-myristoyl glycine lipid modification. An important for the stable binding to the membranes region spans residues 3-16 (LYVSRLFNRLFQKK). GTP is bound by residues 27-32 (AAGKTT), 126-129 (NKQD), and alanine 160.

This sequence belongs to the small GTPase superfamily. Arf family. As to quaternary structure, may interact with GTPase RAB5b.

It localises to the golgi apparatus membrane. The enzyme catalyses GTP + H2O = GDP + phosphate + H(+). Its activity is regulated as follows. Alternates between an inactive GDP-bound form and an active GTP-bound form. Intrinsic GTPase activity is almost undetectable in vitro. Activated by a guanine nucleotide-exchange factor (GEF) and inactivated by GTPase-activating protein ARFGAP1. Functionally, small GTPase involved in protein trafficking between different compartments. Modulates vesicle budding and uncoating within the Golgi complex. In its GTP-bound form, triggers the recruitment of coatomer proteins to the Golgi membrane. The hydrolysis of ARF1-bound GTP, which is mediated by ARFGAPs proteins, is required for dissociation of coat proteins from Golgi membranes and vesicles. Regulates the transport of N-acylated AK2 to the parasitophorous vacuole membrane. May be involved in the activation of lipid kinase PIP5K. This Plasmodium falciparum (isolate 3D7) protein is ADP-ribosylation factor 1.